Here is a 229-residue protein sequence, read N- to C-terminus: Adapter protein MecA (229 aa).

This sequence belongs to the MecA family. In terms of assembly, homodimer.

Enables the recognition and targeting of unfolded and aggregated proteins to the ClpC protease or to other proteins involved in proteolysis. This chain is Adapter protein MecA, found in Latilactobacillus sakei subsp. sakei (strain 23K) (Lactobacillus sakei subsp. sakei).